A 550-amino-acid polypeptide reads, in one-letter code: Arginine--tRNA ligase (550 aa).

The 'HIGH' region motif lies at 130-140 (ANPTGPIHIGG).

This sequence belongs to the class-I aminoacyl-tRNA synthetase family. As to quaternary structure, monomer.

It is found in the cytoplasm. It carries out the reaction tRNA(Arg) + L-arginine + ATP = L-arginyl-tRNA(Arg) + AMP + diphosphate. The protein is Arginine--tRNA ligase (argS) of Mycobacterium leprae (strain TN).